A 2368-amino-acid chain; its full sequence is Voltage-dependent P/Q-type calcium channel subunit alpha-1A (2368 aa).

Topologically, residues 1–100 (MARFGDEMPG…KYAKKITEWP (100 aa)) are cytoplasmic. The stretch at 65–365 (NPIPVRQNCL…LVLGVLSGEF (301 aa)) is one I repeat. The helical transmembrane segment at 101-119 (PFEYMILATIIANCIVLAL) threads the bilayer. Topologically, residues 120–138 (EQHLPDDDKTPMSERLDDT) are extracellular. A helical membrane pass occupies residues 139-156 (EPYFIGIFCFEAGIKIVA). The Cytoplasmic portion of the chain corresponds to 157–168 (LGFAFHKGSYLR). The chain crosses the membrane as a helical span at residues 169-184 (NGWNVMDFVVVLTGIL). Topologically, residues 185–192 (ATVGTEFD) are extracellular. A helical membrane pass occupies residues 193–211 (LRTLRAVRVLRPLKLVSGI). Residues 212 to 230 (PSLQVVLKSIMKAMIPLLQ) lie on the Cytoplasmic side of the membrane. A helical transmembrane segment spans residues 231–250 (IGLLLFFAILIFAIIGLEFY). At 251–337 (MGKFHTTCFE…NSNDASGNTW (87 aa)) the chain is on the extracellular side. The N-linked (GlcNAc...) asparagine glycan is linked to asparagine 285. A Ca(2+)-binding site is contributed by glutamate 320. Residues 338–362 (NWLYFIPLIIIGSFFMLNLVLGVLS) traverse the membrane as a helical segment. Topologically, residues 363–489 (GEFAKERERV…FYIRRMVKTQ (127 aa)) are cytoplasmic. Residues 385 to 402 (QQIERELNGYMEWISKAE) are binding to the beta subunit. Threonine 411 bears the Phosphothreonine mark. Serine 450 and serine 453 each carry phosphoserine. One copy of the II repeat lies at 475-719 (ERRMRFYIRR…VFLAIAVDNL (245 aa)). The chain crosses the membrane as a helical span at residues 490 to 509 (AFYWTVLSLVALNTLCVAIV). Residues 510–523 (HYNQPEWLSDFLYY) lie on the Extracellular side of the membrane. A helical membrane pass occupies residues 524-543 (AEFIFLGLFMSEMFIKMYGL). The Cytoplasmic segment spans residues 544–551 (GTRPYFHS). A helical transmembrane segment spans residues 552-570 (SFNCFDCGVIIGSIFEVIW). Residues 571–580 (AVIKPGTSFG) lie on the Extracellular side of the membrane. A helical transmembrane segment spans residues 581 to 599 (ISVLRALRLLRIFKVTKYW). The Cytoplasmic segment spans residues 600-618 (ASLRNLVVSLLNSMKSIIS). The chain crosses the membrane as a helical span at residues 619-638 (LLFLLFLFIVVFALLGMQLF). Over 639–691 (GGQFNFDEGTPPTNFDTFPAAIMTVFQILTGEDWNEVMYDGIKSQGGVQGGMV) the chain is Extracellular. Position 670 (glutamate 670) interacts with Ca(2+). A helical membrane pass occupies residues 692–716 (FSIYFIVLTLFGNYTLLNVFLAIAV). At 717 to 1190 (DNLANAQELT…TNPLRRLCHY (474 aa)) the chain is on the cytoplasmic side. Serine 752 and serine 755 each carry phosphoserine. The interval 762–781 (AVKEQQKNQKPTKSVWEQRT) is disordered. Residues 769–779 (NQKPTKSVWEQ) show a composition bias toward polar residues. A Phosphoserine modification is found at serine 792. 2 disordered regions span residues 823 to 1117 (PLVV…RKPE) and 1137 to 1170 (VNKN…KPMP). 3 stretches are compositionally biased toward basic and acidic residues: residues 850-862 (RPRE…DARR), 871-924 (APGR…EGEP), and 932-958 (RPGD…RAAD). Phosphoserine is present on residues serine 1038, serine 1042, and serine 1051. Residues 1056 to 1073 (GNSTNPGPALATNPQNAA) show a composition bias toward polar residues. Positions 1074 to 1083 (SRRTPNNPGN) are enriched in low complexity. A compositionally biased stretch (polar residues) spans 1094–1111 (ENSLIVTNPSSTQPNSAK). A compositionally biased stretch (acidic residues) spans 1153 to 1163 (KKEEEEADPGE). Residues 1182–1465 (NPLRRLCHYI…IFVALIIITF (284 aa)) form an III repeat. A helical membrane pass occupies residues 1191 to 1214 (ILNLRYFEMCILMVIAMSSIALAA). Topologically, residues 1215–1231 (EDPVQPNAPRNNVLRYF) are extracellular. The helical transmembrane segment at 1232–1251 (DYVFTGVFTFEMVIKMIDLG) threads the bilayer. At 1252 to 1258 (LVLHQGA) the chain is on the cytoplasmic side. Residues 1259–1282 (YFRDLWNILDFIVVSGALVAFAFT) form a helical membrane-spanning segment. The Extracellular segment spans residues 1283-1293 (GNSKGKDINTI). The chain crosses the membrane as a helical span at residues 1294 to 1311 (KSLRVLRVLRPLKTIKRL). Residues 1312-1330 (PKLKAVFDCVVNSLKNVFN) are Cytoplasmic-facing. The chain crosses the membrane as a helical span at residues 1331 to 1350 (ILIVYMLFMFIFAVVAVQLF). At 1351–1437 (KGKFFHCTDE…QGPSPGYRME (87 aa)) the chain is on the extracellular side. Residue glutamate 1411 coordinates Ca(2+). Residues 1438–1462 (MSIFYVVYFVVFPFFFVNIFVALII) form a helical membrane-spanning segment. At 1463–1518 (ITFQEQGDKMMEEYSLEKNERACIDFAISAKPLTRHMPQNKQSFQYRMWQFVVSPP) the chain is on the cytoplasmic side. The stretch at 1502–1765 (NKQSFQYRMW…LFVAVIMDNF (264 aa)) is one IV repeat. The chain crosses the membrane as a helical span at residues 1519–1537 (FEYTIMAMIALNTIVLMMK). Topologically, residues 1538–1551 (FYGASVAYENALRV) are extracellular. Residues 1552-1573 (FNIVFTSLFSLECVLKVMAFGI) form a helical membrane-spanning segment. Over 1574–1580 (LNYFRDA) the chain is Cytoplasmic. Residues 1581–1600 (WNIFDFVTVLGSITDILVTE) form a helical membrane-spanning segment. The Extracellular portion of the chain corresponds to 1601 to 1607 (FGNNFIN). Residue asparagine 1607 is glycosylated (N-linked (GlcNAc...) asparagine). The chain crosses the membrane as a helical span at residues 1608 to 1626 (LSFLRLFRAARLIKLLRQG). Residues 1627 to 1645 (YTIRILLWTFVQSFKALPY) lie on the Cytoplasmic side of the membrane. Residues 1646-1665 (VCLLIAMLFFIYAIIGMQVF) traverse the membrane as a helical segment. Residues 1666–1737 (GNIGIDGEDE…ILTADCGNEF (72 aa)) are Extracellular-facing. Residues 1738–1763 (AYFYFVSFIFLCSFLMLNLFVAVIMD) form a helical membrane-spanning segment. Topologically, residues 1764-2368 (NFEYLTRDSS…AYSESEDDWC (605 aa)) are cytoplasmic. Phosphothreonine is present on threonine 1935. Residues 1940-2368 (QRMEPPSPTQ…AYSESEDDWC (429 aa)) are disordered. 2 stretches are compositionally biased toward polar residues: residues 1948-1963 (TQEG…STQL) and 1981-1997 (SWVT…TGTW). Residues serine 1998, serine 2016, serine 2028, serine 2030, serine 2071, and serine 2091 each carry the phosphoserine modification. Residues 2008 to 2017 (PNSQPNSQSV) show a composition bias toward polar residues. Basic and acidic residues predominate over residues 2018-2034 (EMREMGTDGYSDSEHYL). Over residues 2063–2073 (DLSTISDTSPM) the composition is skewed to polar residues. Composition is skewed to basic and acidic residues over residues 2085 to 2102 (RRLD…ENQR) and 2143 to 2153 (PSKDRDQDRGR). A compositionally biased stretch (basic residues) spans 2154–2172 (PKDRKHRPHHHHHHHHHHP). Over residues 2173–2209 (PAPDRDRYAQERPDTGRARAREQRWSRSPSEGREHTT) the composition is skewed to basic and acidic residues. Positions 2213–2231 (GSSSVSGSPAPSTSGTSTP) are enriched in low complexity. Residues 2289–2305 (EGPRPRGADYTEPDSPR) are compositionally biased toward basic and acidic residues.

The protein belongs to the calcium channel alpha-1 subunit (TC 1.A.1.11) family. CACNA1A subfamily. As to quaternary structure, voltage-dependent calcium channels are multisubunit complexes, consisting of alpha-1, alpha-2, beta and delta subunits in a 1:1:1:1 ratio. The channel activity is directed by the pore-forming and voltage-sensitive alpha-1 subunit. In many cases, this subunit is sufficient to generate voltage-sensitive calcium channel activity. The auxiliary subunits beta and alpha-2/delta linked by a disulfide bridge regulate the channel activity. Interacts with CABP1. Interacts with the spider omega-agatoxin-IVA (AC P30288). Interacts with TSPOAP1. As to expression, brain specific; mainly found in the cerebellum, olfactory bulb, cerebral cortex, hippocampus, and inferior colliculus. In the hippocampus, expression occurs in pyramidal and granule neurons, as well as in interneurons. Purkinje cells contain predominantly P-type VSCC, the Q-type being a prominent calcium current in cerebellar granule cells.

Its subcellular location is the cell membrane. It catalyses the reaction Ca(2+)(in) = Ca(2+)(out). In terms of biological role, voltage-sensitive calcium channels (VSCC) mediate the entry of calcium ions into excitable cells and are also involved in a variety of calcium-dependent processes, including muscle contraction, hormone or neurotransmitter release, gene expression, cell motility, cell division and cell death. The isoform alpha-1A gives rise to P and/or Q-type calcium currents. P/Q-type calcium channels belong to the 'high-voltage activated' (HVA) group and are specifically blocked by the spider omega-agatoxin-IVA (AC P54282). They are however insensitive to dihydropyridines (DHP). The sequence is that of Voltage-dependent P/Q-type calcium channel subunit alpha-1A from Mus musculus (Mouse).